We begin with the raw amino-acid sequence, 279 residues long: Small ribosomal subunit protein uS9m (279 aa).

This sequence belongs to the universal ribosomal protein uS9 family.

The protein resides in the mitochondrion. In Eremothecium gossypii (strain ATCC 10895 / CBS 109.51 / FGSC 9923 / NRRL Y-1056) (Yeast), this protein is Small ribosomal subunit protein uS9m (MRPS9).